Here is a 603-residue protein sequence, read N- to C-terminus: DNA mismatch repair protein MutL (603 aa).

The tract at residues 361–383 is disordered; that stretch reads KETPTLFSKPTIPEYVPSDEDAP.

This sequence belongs to the DNA mismatch repair MutL/HexB family.

Functionally, this protein is involved in the repair of mismatches in DNA. It is required for dam-dependent methyl-directed DNA mismatch repair. May act as a 'molecular matchmaker', a protein that promotes the formation of a stable complex between two or more DNA-binding proteins in an ATP-dependent manner without itself being part of a final effector complex. The protein is DNA mismatch repair protein MutL of Listeria monocytogenes serotype 4b (strain CLIP80459).